We begin with the raw amino-acid sequence, 257 residues long: NAD-capped RNA hydrolase NudC (257 aa).

Substrate contacts are provided by K27 and R71. The Zn(2+) site is built by C100 and C103. E113 contacts substrate. Residues C118 and C121 each contribute to the Zn(2+) site. A substrate-binding site is contributed by Y126. Residues 127–251 (PQIAPCIIVG…IARRLIEDTI (125 aa)) enclose the Nudix hydrolase domain. A divalent metal cation-binding residues include A160, E176, and E180. A Nudix box motif is present at residues 161–182 (GFVEVGETLEEAVVREVMEESN). Substrate is bound at residue 194-201 (QPWPFPHS). E221 contacts a divalent metal cation. A243 contributes to the substrate binding site.

The protein belongs to the Nudix hydrolase family. NudC subfamily. In terms of assembly, homodimer. Mg(2+) is required as a cofactor. It depends on Mn(2+) as a cofactor. Zn(2+) serves as cofactor.

It carries out the reaction a 5'-end NAD(+)-phospho-ribonucleoside in mRNA + H2O = a 5'-end phospho-adenosine-phospho-ribonucleoside in mRNA + beta-nicotinamide D-ribonucleotide + 2 H(+). It catalyses the reaction NAD(+) + H2O = beta-nicotinamide D-ribonucleotide + AMP + 2 H(+). The catalysed reaction is NADH + H2O = reduced beta-nicotinamide D-ribonucleotide + AMP + 2 H(+). Its function is as follows. mRNA decapping enzyme that specifically removes the nicotinamide adenine dinucleotide (NAD) cap from a subset of mRNAs by hydrolyzing the diphosphate linkage to produce nicotinamide mononucleotide (NMN) and 5' monophosphate mRNA. The NAD-cap is present at the 5'-end of some mRNAs and stabilizes RNA against 5'-processing. Has preference for mRNAs with a 5'-end purine. Catalyzes the hydrolysis of a broad range of dinucleotide pyrophosphates. The protein is NAD-capped RNA hydrolase NudC of Photorhabdus laumondii subsp. laumondii (strain DSM 15139 / CIP 105565 / TT01) (Photorhabdus luminescens subsp. laumondii).